The sequence spans 152 residues: Large ribosomal subunit protein bL9 (152 aa).

This sequence belongs to the bacterial ribosomal protein bL9 family.

Functionally, binds to the 23S rRNA. This Nocardia farcinica (strain IFM 10152) protein is Large ribosomal subunit protein bL9.